Here is a 301-residue protein sequence, read N- to C-terminus: tRNA-cytidine(32) 2-sulfurtransferase (301 aa).

A PP-loop motif motif is present at residues 55 to 60 (SGGKDS). 3 residues coordinate [4Fe-4S] cluster: cysteine 130, cysteine 133, and cysteine 221.

This sequence belongs to the TtcA family. Homodimer. It depends on Mg(2+) as a cofactor. The cofactor is [4Fe-4S] cluster.

It localises to the cytoplasm. The enzyme catalyses cytidine(32) in tRNA + S-sulfanyl-L-cysteinyl-[cysteine desulfurase] + AH2 + ATP = 2-thiocytidine(32) in tRNA + L-cysteinyl-[cysteine desulfurase] + A + AMP + diphosphate + H(+). It functions in the pathway tRNA modification. In terms of biological role, catalyzes the ATP-dependent 2-thiolation of cytidine in position 32 of tRNA, to form 2-thiocytidine (s(2)C32). The sulfur atoms are provided by the cysteine/cysteine desulfurase (IscS) system. This chain is tRNA-cytidine(32) 2-sulfurtransferase, found in Acinetobacter baumannii (strain SDF).